A 522-amino-acid polypeptide reads, in one-letter code: Sorting nexin-1 (522 aa).

Disordered regions lie at residues 1 to 89 and 115 to 142; these read MASG…QDLF and SLPP…QEDQ. A phosphoserine mark is found at Ser-32 and Ser-39. Over residues 35-45 the composition is skewed to acidic residues; that stretch reads EAGDSDTEGED. Phosphothreonine is present on residues Thr-41 and Thr-48. A phosphoserine mark is found at Ser-58 and Ser-72. Residues 60-73 are compositionally biased toward polar residues; it reads KRTTSLLPINNGSK. Positions 132–142 are enriched in acidic residues; it reads EELEEEEQEDQ. The PX domain maps to 143-272; the sequence is FDLTVGITDP…EFLEKEELPR (130 aa). Positions 186, 188, and 214 each coordinate a 1,2-diacyl-sn-glycero-3-phospho-(1D-myo-inositol-3-phosphate). At Ser-188 the chain carries Phosphoserine. Lys-237 is subject to N6-acetyllysine. Residue Arg-238 participates in a 1,2-diacyl-sn-glycero-3-phospho-(1D-myo-inositol-3-phosphate) binding. At Ser-280 the chain carries Phosphoserine. The membrane-binding amphipathic helix stretch occupies residues 281–298; that stretch reads GAGLLKMFNKATDAVSKM. Positions 302–522 constitute a BAR domain; that stretch reads MNESDIWFEE…AFLPEAKAIS (221 aa).

The protein belongs to the sorting nexin family. As to quaternary structure, predominantly forms heterodimers with BAR domain-containing sorting nexins SNX5, SNX6 and SNX32; can self-associate to form homodimers. The heterodimers are proposed to self-assemble into helical arrays on the membrane to stabilize and expand local membrane curvature underlying endosomal tubule formation. Thought to be a component of the originally described retromer complex (also called SNX-BAR retromer) which is a pentamer containing the heterotrimeric retromer cargo-selective complex (CSC), also described as vacuolar protein sorting subcomplex (VPS) and a heterodimeric membrane-deforming subcomplex formed between SNX1 or SNX2 and SNX5 or SNX6 (also called SNX-BAR subcomplex); the respective CSC and SNX-BAR subcomplexes associate with low affinity. Interacts with SNX5, SNX6, SNX32, VPS26A, VPS29, VPS35, DRD5, DENND5A, KALRN, RHOG (GDP-bound form). The interaction with SNX2 is reported controversially. Interacts with DNAJC13; prevented by presence of HGS. Interacts with HGS.

The protein localises to the endosome membrane. Its subcellular location is the golgi apparatus. It is found in the trans-Golgi network membrane. The protein resides in the early endosome membrane. It localises to the cell projection. The protein localises to the lamellipodium. Its function is as follows. Involved in several stages of intracellular trafficking. Interacts with membranes containing phosphatidylinositol 3-phosphate (PtdIns(3P)) or phosphatidylinositol 3,5-bisphosphate (PtdIns(3,5)P2). Acts in part as component of the retromer membrane-deforming SNX-BAR subcomplex. The SNX-BAR retromer mediates retrograde transport of cargo proteins from endosomes to the trans-Golgi network (TGN) and is involved in endosome-to-plasma membrane transport for cargo protein recycling. The SNX-BAR subcomplex functions to deform the donor membrane into a tubular profile called endosome-to-TGN transport carrier (ETC). Can sense membrane curvature and has in vitro vesicle-to-membrane remodeling activity. Involved in retrograde endosome-to-TGN transport of lysosomal enzyme receptors (IGF2R, M6PR and SORT1). Plays a role in targeting ligand-activated EGFR to the lysosomes for degradation after endocytosis from the cell surface and release from the Golgi. Involvement in retromer-independent endocytic trafficking of P2RY1 and lysosomal degradation of protease-activated receptor-1/F2R. Promotes KALRN- and RHOG-dependent but retromer-independent membrane remodeling such as lamellipodium formation; the function is dependent on GEF activity of KALRN. Required for endocytosis of DRD5 upon agonist stimulation but not for basal receptor trafficking. The chain is Sorting nexin-1 (SNX1) from Macaca fascicularis (Crab-eating macaque).